Here is a 151-residue protein sequence, read N- to C-terminus: UPF0208 membrane protein YfbV (151 aa).

The Cytoplasmic portion of the chain corresponds to 1-45 (MSTPDNRSVNFFSLFCRGQHYSKTWPLEKRLAPVFVENRVIKMTR). The chain crosses the membrane as a helical span at residues 46-65 (YAIRFMPPIAVFTLCWQIAL). The Periplasmic portion of the chain corresponds to 66-68 (GGQ). The helical transmembrane segment at 69–91 (LGPAVATALFALSLPMQGLWWLG) threads the bilayer. Topologically, residues 92-151 (KRSVTPLPPAILNWFYEVRGKLQESGQVLAPVEGKPDYQALADTLKRAFKQLDKTFLDDL) are cytoplasmic.

The protein belongs to the UPF0208 family.

The protein localises to the cell inner membrane. The polypeptide is UPF0208 membrane protein YfbV (yfbV) (Escherichia coli O6:H1 (strain CFT073 / ATCC 700928 / UPEC)).